The chain runs to 694 residues: Acetolactate synthase catalytic subunit, mitochondrial (694 aa).

Residues 1 to 42 constitute a mitochondrion transit peptide; the sequence is MLRSRQATNALRAVGQTRPLRSQTAVAFTQSLNKVPSNRRSE. Over residues 45 to 58 the composition is skewed to low complexity; that stretch reads VATASSTASGAFNS. Residues 45 to 69 are disordered; sequence VATASSTASGAFNSQVRPTPSPTFN. Polar residues predominate over residues 59–69; the sequence is QVRPTPSPTFN. Residue Glu140 participates in thiamine diphosphate binding. FAD is bound by residues Arg242, 358–379, and 410–429; these read HGSA…LGGR and EIMP…IVGD. Residues 505–585 form a thiamine pyrophosphate binding region; the sequence is QHQMWTAQHF…VKVIVLNNEE (81 aa). Residues Asp556, Asn583, and Glu585 each contribute to the Mg(2+) site.

It belongs to the TPP enzyme family. Homodimer. Mg(2+) is required as a cofactor. Requires thiamine diphosphate as cofactor.

It is found in the mitochondrion. The enzyme catalyses 2 pyruvate + H(+) = (2S)-2-acetolactate + CO2. It carries out the reaction 2-oxobutanoate + pyruvate + H(+) = (S)-2-ethyl-2-hydroxy-3-oxobutanoate + CO2. It participates in amino-acid biosynthesis; L-isoleucine biosynthesis; L-isoleucine from 2-oxobutanoate: step 1/4. It functions in the pathway amino-acid biosynthesis; L-valine biosynthesis; L-valine from pyruvate: step 1/4. Functionally, acetolactate synthase catalytic subunit, mitochondrial; part of the gene cluster that mediates the biosynthesis of chlorflavonin, a fungal flavonoid with acetolactate synthase inhibitory activity. Is not direcly involved in chlorflavonin biosynthesis but acts as a self-resistant protein that effectively confers chlorflavonin resistance to the native host. As a catalytic subunit of mitochondrial acetolactate synthase, catalyzes the first of a series of common steps in the biosynthesis of the branched-chain amino acids. Catalyzes the irreversible decarboxylation of pyruvate to a bound hydroxyethyl group that then condenses with either a second pyruvate molecule to form 2-acetolactate (AL) or with 2-ketobutyrate to form 2-aceto-2-hydroxybutyrate (AHB). The first product is the precursor for valine and leucine biosynthesis, while the second leads to isoleucine. The chain is Acetolactate synthase catalytic subunit, mitochondrial from Aspergillus candidus.